Here is a 961-residue protein sequence, read N- to C-terminus: Exportin-T (961 aa).

It belongs to the exportin family.

It is found in the cytoplasm. The protein localises to the nucleus. In terms of biological role, mediates the nuclear export of aminoacylated tRNAs. This Danio rerio (Zebrafish) protein is Exportin-T (xpot).